A 309-amino-acid polypeptide reads, in one-letter code: Taste receptor type 2 member 113 (309 aa).

At 1 to 10 (MVAVLQSTLP) the chain is on the extracellular side. The chain crosses the membrane as a helical span at residues 11-31 (IIFSMEFIMGTLGNGFIFLIV). At 32 to 55 (CIDWVQRRKISLVDQIRTALAISR) the chain is on the cytoplasmic side. A helical membrane pass occupies residues 56 to 76 (IALIWLIFLDWWVSVHYPALH). Residues 77 to 80 (ETGK) lie on the Extracellular side of the membrane. The helical transmembrane segment at 81-101 (MLSTYLISWTVINHCNFWLTA) threads the bilayer. The Cytoplasmic portion of the chain corresponds to 102–127 (NLSILYFLKIANFSNIIFLYLKFRSK). A helical membrane pass occupies residues 128 to 148 (NVVLVTLLVSLFFLFLNTVII). The Extracellular portion of the chain corresponds to 149–185 (KIFSDVCFDSVQRNVSQIFIMYNHEQICKFLSFTNPM). Residue asparagine 162 is glycosylated (N-linked (GlcNAc...) asparagine). Residues 186–206 (FTFIPFVMSTVMFSLLIFSLW) form a helical membrane-spanning segment. The Cytoplasmic portion of the chain corresponds to 207-229 (RHLKNMQHTAKGCRDISTTVHIR). A helical membrane pass occupies residues 230–250 (ALQTIIVSVVLYTIFFLSFFV). Over 251 to 262 (KVWSFVSPERYL) the chain is Extracellular. The chain crosses the membrane as a helical span at residues 263–283 (IFLFVWALGNAVFSAHPFVMI). Residues 284–309 (LVNRRLRLASLSLIFWLWYRFKNIEV) are Cytoplasmic-facing.

This sequence belongs to the G-protein coupled receptor T2R family.

It localises to the membrane. Its function is as follows. Putative taste receptor which may play a role in the perception of bitterness. The sequence is that of Taste receptor type 2 member 113 from Mus musculus (Mouse).